The following is a 492-amino-acid chain: MKGLFLRIIAIVALLLWAIDMVFPWQQIMRSEENRYTAIQSRGKLVVGTINNPISYFIDHAGQAAGLEYELSKAFADYLNVDLEILAMSNGDELFSALKNNKIDIAAANLLYQPNKLDMFQVGPTYNSASWQLVYRKGTERPRSLGELKGSLSIASGSELTELLKVEKEKYPDLIWRVNEKLTPEELLIQMADGKIDYVIANSIDVSAVQQIKPNVAVAFDVTDESTVHWYLPSNSYSELQASLLDFMNSAIETGLIARIEEKYFNHLAQFDYVDTRSYLRAIETVLPKFAPLFEKYKGDLDWCLLAAIAYQESHWNPDATSPTGVRGMMMLTKATAERMRIQDRTDPEQSIKAGSEYLHWLITQMPDTIKEDERIWFALAAYNMGLGHLLDARRLTKSLGGDPDNWLDVKKNLPLLAEKRYYTGLKYGYARGYEAYHYVENIRRYMNSIVHYYRVQQAQIEETLDTQAAEIENINEIKKETDTLATTVTTQ.

Residues 1-18 form the signal peptide; it reads MKGLFLRIIAIVALLLWA. The tract at residues 19-268 is non-LT domain; that stretch reads IDMVFPWQQI…RIEEKYFNHL (250 aa). The interval 270–492 is LT domain; the sequence is QFDYVDTRSY…DTLATTVTTQ (223 aa). Glu313 is an active-site residue.

The protein in the N-terminal section; belongs to the bacterial solute-binding protein 3 family. In the C-terminal section; belongs to the transglycosylase Slt family.

The protein resides in the cell outer membrane. The catalysed reaction is Exolytic cleavage of the (1-&gt;4)-beta-glycosidic linkage between N-acetylmuramic acid (MurNAc) and N-acetylglucosamine (GlcNAc) residues in peptidoglycan, from either the reducing or the non-reducing ends of the peptidoglycan chains, with concomitant formation of a 1,6-anhydrobond in the MurNAc residue.. Its function is as follows. Murein-degrading enzyme that degrades murein glycan strands and insoluble, high-molecular weight murein sacculi, with the concomitant formation of a 1,6-anhydromuramoyl product. Lytic transglycosylases (LTs) play an integral role in the metabolism of the peptidoglycan (PG) sacculus. Their lytic action creates space within the PG sacculus to allow for its expansion as well as for the insertion of various structures such as secretion systems and flagella. The sequence is that of Membrane-bound lytic murein transglycosylase F from Pasteurella multocida (strain Pm70).